Here is a 466-residue protein sequence, read N- to C-terminus: Triplex capsid protein 1 (466 aa).

Residues 1 to 29 form a disordered region; it reads MKTKPLPTAPMAWAESAVETTTSPRELAG.

Belongs to the herpesviridae TRX1 protein family. Interacts with TRX2, MCP and capsid vertex component 2/CVC2.

The protein resides in the virion. The protein localises to the host nucleus. Its function is as follows. Structural component of the T=16 icosahedral capsid. The capsid is composed of pentamers and hexamers of major capsid protein/MCP, which are linked together by heterotrimers called triplexes. These triplexes are formed by a single molecule of triplex protein 1/TRX1 and two copies of triplex protein 2/TRX2. Additionally, TRX1 is required for efficient transport of TRX2 to the nucleus, which is the site of capsid assembly. The sequence is that of Triplex capsid protein 1 from Homo sapiens (Human).